A 438-amino-acid polypeptide reads, in one-letter code: Hydrogenobyrinate a,c-diamide synthase (438 aa).

A GATase cobBQ-type domain is found at Arg-247 to Gly-438. Residue Cys-329 is the Nucleophile of the active site.

The protein belongs to the CobB/CbiA family. Mg(2+) serves as cofactor.

It carries out the reaction hydrogenobyrinate + 2 L-glutamine + 2 ATP + 2 H2O = hydrogenobyrinate a,c-diamide + 2 L-glutamate + 2 ADP + 2 phosphate + 2 H(+). Its pathway is cofactor biosynthesis; adenosylcobalamin biosynthesis; cob(II)yrinate a,c-diamide from precorrin-2 (aerobic route): step 9/10. Functionally, catalyzes the ATP-dependent amidation of the two carboxylate groups at positions a and c of hydrogenobyrinate, using either L-glutamine or ammonia as the nitrogen source. This Agrobacterium fabrum (strain C58 / ATCC 33970) (Agrobacterium tumefaciens (strain C58)) protein is Hydrogenobyrinate a,c-diamide synthase.